Consider the following 538-residue polypeptide: Bifunctional purine biosynthesis protein PurH (538 aa).

Residues isoleucine 8–threonine 158 enclose the MGS-like domain.

Belongs to the PurH family.

It catalyses the reaction (6R)-10-formyltetrahydrofolate + 5-amino-1-(5-phospho-beta-D-ribosyl)imidazole-4-carboxamide = 5-formamido-1-(5-phospho-D-ribosyl)imidazole-4-carboxamide + (6S)-5,6,7,8-tetrahydrofolate. The catalysed reaction is IMP + H2O = 5-formamido-1-(5-phospho-D-ribosyl)imidazole-4-carboxamide. It participates in purine metabolism; IMP biosynthesis via de novo pathway; 5-formamido-1-(5-phospho-D-ribosyl)imidazole-4-carboxamide from 5-amino-1-(5-phospho-D-ribosyl)imidazole-4-carboxamide (10-formyl THF route): step 1/1. The protein operates within purine metabolism; IMP biosynthesis via de novo pathway; IMP from 5-formamido-1-(5-phospho-D-ribosyl)imidazole-4-carboxamide: step 1/1. This Agrobacterium fabrum (strain C58 / ATCC 33970) (Agrobacterium tumefaciens (strain C58)) protein is Bifunctional purine biosynthesis protein PurH.